Here is a 414-residue protein sequence, read N- to C-terminus: Dihydroorotase (414 aa).

Zn(2+) contacts are provided by H56 and H58. Substrate contacts are provided by residues 58 to 60 (HFR) and N90. K138, H171, H219, and D280 together coordinate Zn(2+). K138 carries the N6-carboxylysine modification. D280 is an active-site residue. H284 lines the substrate pocket.

The protein belongs to the metallo-dependent hydrolases superfamily. DHOase family. Class I DHOase subfamily. Zn(2+) is required as a cofactor.

It carries out the reaction (S)-dihydroorotate + H2O = N-carbamoyl-L-aspartate + H(+). It functions in the pathway pyrimidine metabolism; UMP biosynthesis via de novo pathway; (S)-dihydroorotate from bicarbonate: step 3/3. Its function is as follows. Catalyzes the reversible cyclization of carbamoyl aspartate to dihydroorotate. The chain is Dihydroorotase from Thermoplasma acidophilum (strain ATCC 25905 / DSM 1728 / JCM 9062 / NBRC 15155 / AMRC-C165).